Reading from the N-terminus, the 147-residue chain is D-aminoacyl-tRNA deacylase (147 aa).

The Gly-cisPro motif, important for rejection of L-amino acids motif lies at 136 to 137 (GP).

Belongs to the DTD family. As to quaternary structure, homodimer.

The protein localises to the cytoplasm. The enzyme catalyses glycyl-tRNA(Ala) + H2O = tRNA(Ala) + glycine + H(+). It carries out the reaction a D-aminoacyl-tRNA + H2O = a tRNA + a D-alpha-amino acid + H(+). Functionally, an aminoacyl-tRNA editing enzyme that deacylates mischarged D-aminoacyl-tRNAs. Also deacylates mischarged glycyl-tRNA(Ala), protecting cells against glycine mischarging by AlaRS. Acts via tRNA-based rather than protein-based catalysis; rejects L-amino acids rather than detecting D-amino acids in the active site. By recycling D-aminoacyl-tRNA to D-amino acids and free tRNA molecules, this enzyme counteracts the toxicity associated with the formation of D-aminoacyl-tRNA entities in vivo and helps enforce protein L-homochirality. The polypeptide is D-aminoacyl-tRNA deacylase (Streptococcus equi subsp. zooepidemicus (strain MGCS10565)).